Here is a 926-residue protein sequence, read N- to C-terminus: Sperm-associated antigen 1 (926 aa).

3 TPR repeats span residues 209-242 (ATREKEKGNEAFNSGDYEEAVMYYTRSISALPTV), 244-275 (AYNNRAQAEIKLQNWNSAFQDCEKVLELEPGN), and 276-309 (VKALLRRATTYKHQNKLREATEDLSKVLDVEPDN). The segment at 318–452 (EVERDLKNSE…ENPAGLKSQG (135 aa)) is disordered. Residues serine 347 and serine 354 each carry the phosphoserine modification. Residues 352 to 368 (GKSGRKHEDGGGDKKPA) are compositionally biased toward basic and acidic residues. Over residues 369–379 (EPAGAARAAQP) the composition is skewed to low complexity. At serine 423 the chain carries Phosphoserine. Positions 428–441 (AGGGATGHPGGGQG) are enriched in gly residues. 6 TPR repeats span residues 445 to 478 (PAGLKSQGNELFRSGQFAEAAGKYSAAIALLEPA), 487 to 520 (SILYSNRAACYLKEGNCSGCIQDCNRALELHPFS), 522 to 554 (KPLLRRAMAYETLEQYGKAYVDYKTVLQIDCGL), 623 to 656 (FKALKEEGNQCVNDKNYKDALSKYSECLKINNKE), 657 to 690 (CAIYTNRALCYLKLCQFEEAKQDCDQALQLADGN), and 692 to 724 (KAFYRRALAHKGLKNYQKSLIDLNKVILLDPSI). 2 stretches are compositionally biased toward basic and acidic residues: residues 758–769 (IQEVNEGKEEPG) and 784–799 (KGGKSSRSPEDPEKLP). The disordered stretch occupies residues 758-801 (IQEVNEGKEEPGRPAGEVSMGCLASEKGGKSSRSPEDPEKLPIA). 781-788 (ASEKGGKS) serves as a coordination point for GTP. Serine 791 carries the post-translational modification Phosphoserine.

Present in most tissues, including lung, with the strongest expression in brain, colon, kidney, and testis. In sperm and testis, detected in particular in pachytene primary spermatocytes. Up-regulated in pancreatic tumor tissues and not in normal pancreatic tissue.

It is found in the cytoplasm. The protein localises to the dynein axonemal particle. May play a role in the cytoplasmic assembly of the ciliary dynein arms. May play a role in fertilization. Binds GTP and has GTPase activity. This is Sperm-associated antigen 1 (SPAG1) from Homo sapiens (Human).